We begin with the raw amino-acid sequence, 91 residues long: Gene 76 protein (91 aa).

A disordered region spans residues 58–81 (ELPSCDESPKGEARRDNDNRDGGK).

This chain is Gene 76 protein (76), found in Mycobacterium phage L5 (Mycobacteriophage L5).